Consider the following 263-residue polypeptide: MASTQAQKALETFERFLASLDLESYQQKYRPIKTVEQDLPRELNPLPDLYEHYWKALEDNPSFLGFEEFFDHWWEKRLRPLDEFIRKYFWGCSYAFVRLGLEARLYRTAVSIWTQFHFCYRWNASCELPLEAAPELDAQGIDALIHTSGSSTGIQIKKETYRSEAKSENRFLRKQRGTALIEIPYTLQTPEELEEKAKRARVNGETYRLWAKVAHHLDRLENGFVIFRESYVKSIELFLQKNAPTLSGLIRWDRVAQEALTAP.

Post-translationally, only 15% of purified enzyme (upon expression in E.coli) can be sequenced, suggesting the remainder has a blocked N-terminus.

It catalyses the reaction Endonucleolytic cleavage of DNA to give specific double-stranded fragments with terminal 5'-phosphates.. Its function is as follows. A P subtype restriction enzyme that recognizes the double-stranded sequence 5'-TCGA-3' and cleaves after T-1. In Thermus aquaticus, this protein is Type II restriction enzyme TaqI (taqIR).